Consider the following 134-residue polypeptide: Cytochrome b5 (134 aa).

Position 2 is an N-acetylalanine (Ala2). Lys7, Lys10, and Lys19 each carry N6-acetyllysine. The 77-residue stretch at 9-85 folds into the Cytochrome b5 heme-binding domain; the sequence is VKYYTLEEIK…SKTFIIGELH (77 aa). Heme contacts are provided by His44 and His68. A helical membrane pass occupies residues 109 to 131; that stretch reads WWTNWVIPAISALIVALMYRLYM.

It belongs to the cytochrome b5 family.

The protein resides in the endoplasmic reticulum membrane. It localises to the microsome membrane. In terms of biological role, cytochrome b5 is a membrane-bound hemoprotein functioning as an electron carrier for several membrane-bound oxygenases. The sequence is that of Cytochrome b5 (CYB5A) from Oryctolagus cuniculus (Rabbit).